A 434-amino-acid polypeptide reads, in one-letter code: Cytochrome P450 144 (434 aa).

2 residues coordinate substrate: Asp124 and His128. Arg132, Arg326, His383, and Cys385 together coordinate heme.

This sequence belongs to the cytochrome P450 family. In terms of assembly, monomer. Heme serves as cofactor.

The chain is Cytochrome P450 144 (cyp144) from Mycobacterium tuberculosis (strain CDC 1551 / Oshkosh).